The chain runs to 485 residues: CCA-adding enzyme (485 aa).

Residues Ser53 and Arg56 each coordinate ATP. The CTP site is built by Ser53 and Arg56. Mg(2+) contacts are provided by Asp65, Asp67, and Asp124. The ATP site is built by His146, Lys164, and Tyr173. Positions 146, 164, and 173 each coordinate CTP.

It belongs to the tRNA nucleotidyltransferase/poly(A) polymerase family. Archaeal CCA-adding enzyme subfamily. Homodimer. Mg(2+) serves as cofactor.

The enzyme catalyses a tRNA precursor + 2 CTP + ATP = a tRNA with a 3' CCA end + 3 diphosphate. It carries out the reaction a tRNA with a 3' CCA end + 2 CTP + ATP = a tRNA with a 3' CCACCA end + 3 diphosphate. Its function is as follows. Catalyzes the addition and repair of the essential 3'-terminal CCA sequence in tRNAs without using a nucleic acid template. Adds these three nucleotides in the order of C, C, and A to the tRNA nucleotide-73, using CTP and ATP as substrates and producing inorganic pyrophosphate. tRNA 3'-terminal CCA addition is required both for tRNA processing and repair. Also involved in tRNA surveillance by mediating tandem CCA addition to generate a CCACCA at the 3' terminus of unstable tRNAs. While stable tRNAs receive only 3'-terminal CCA, unstable tRNAs are marked with CCACCA and rapidly degraded. The chain is CCA-adding enzyme from Methanopyrus kandleri (strain AV19 / DSM 6324 / JCM 9639 / NBRC 100938).